Here is a 250-residue protein sequence, read N- to C-terminus: Alpha/beta hydrolase nvfD (250 aa).

Active-site charge relay system residues include Asp-198 and His-226.

The protein belongs to the AB hydrolase superfamily.

The protein operates within secondary metabolite biosynthesis; terpenoid biosynthesis. In terms of biological role, alpha/beta hydrolase; part of the gene cluster that mediates the biosynthesis of novofumigatonin, a heavily oxygenated meroterpenoid containing a unique orthoester moiety. The first step of the pathway is the synthesis of 3,5-dimethylorsellinic acid (DMOA) by the polyketide synthase nvfA via condensation of one acetyl-CoA starter unit with 3 malonyl-CoA units and 2 methylations. DMOA is then converted to farnesyl-DMOA by the farnesyltransferase nvfB. Epoxydation by FAD-dependent monooxygenase nvfK, followed by a protonation-initiated cyclization catalyzed by the terpene cyclase nvfL leads to the production of asnavolin H. The short chain dehydrogenase nvfC then as a 3-OH dehydrogenase of asnovolin H to yield chemesin D. There are two branches to synthesize asnovolin A from chemesin D. In one branch, chemesin D undergoes Baeyer-Villiger oxidation by nvfH, methylation by nvfJ, and enoyl reduction by the nvfM D enoylreductase that reduces the double bond between C-5'and C-6', to form respectively asnovolin I, asnovolin K, and asnovolin A. In the other branch, the methylation precedes the Baeyer-Villiger oxidation and the enoyl reduction to yield asnovolin A via the asnovolin J intermediate. Asnovolin A is further converted to fumigatonoid A by the Fe(II)/2-oxoglutarate-dependent dioxygenase nvfI that catalyzes an endoperoxidation reaction. The alpha/beta hydrolase nvfD then acts as an epimerase that converts fumigatonoid A to its C-5' epimer, which then undergoes spontaneous or nvfD-catalyzed lactonization. The following step utilizes the ketoreductase nvfG to produce fumigatonoid B. The dioxygenase nvfE further converts fumigatonoid B into fumigatonoid C. Finally the Fe(II)/2-oxoglutarate-dependent dioxygenase nvfF catalyzes two rounds of oxidation to transform fumigatonoid C into the end product, novofumigatonin A. This chain is Alpha/beta hydrolase nvfD, found in Aspergillus novofumigatus (strain IBT 16806).